The following is a 303-amino-acid chain: 5-dehydro-4-deoxyglucarate dehydratase (303 aa).

The protein belongs to the DapA family.

The catalysed reaction is 5-dehydro-4-deoxy-D-glucarate + H(+) = 2,5-dioxopentanoate + CO2 + H2O. Its pathway is carbohydrate acid metabolism; D-glucarate degradation; 2,5-dioxopentanoate from D-glucarate: step 2/2. The sequence is that of 5-dehydro-4-deoxyglucarate dehydratase from Pseudomonas putida (Arthrobacter siderocapsulatus).